The chain runs to 129 residues: L-ectoine synthase (129 aa).

Belongs to the ectoine synthase family.

The enzyme catalyses (2S)-4-acetamido-2-aminobutanoate = L-ectoine + H2O. It functions in the pathway amine and polyamine biosynthesis; ectoine biosynthesis; L-ectoine from L-aspartate 4-semialdehyde: step 3/3. In terms of biological role, catalyzes the circularization of gamma-N-acetyl-alpha,gamma-diaminobutyric acid (ADABA) to ectoine (1,4,5,6-tetrahydro-2-methyl-4-pyrimidine carboxylic acid), which is an excellent osmoprotectant. This Mycobacterium sp. (strain KMS) protein is L-ectoine synthase.